Reading from the N-terminus, the 184-residue chain is Protein Syd (184 aa).

This sequence belongs to the Syd family.

The protein resides in the cell inner membrane. Functionally, interacts with the SecY protein in vivo. May bind preferentially to an uncomplexed state of SecY, thus functioning either as a chelating agent for excess SecY in the cell or as a regulatory factor that negatively controls the translocase function. The polypeptide is Protein Syd (Edwardsiella ictaluri (strain 93-146)).